The sequence spans 155 residues: Small ribosomal subunit protein uS7cz/uS7cy (155 aa).

It belongs to the universal ribosomal protein uS7 family. As to quaternary structure, part of the 30S ribosomal subunit.

The protein resides in the plastid. It localises to the chloroplast. Its function is as follows. One of the primary rRNA binding proteins, it binds directly to 16S rRNA where it nucleates assembly of the head domain of the 30S subunit. The sequence is that of Small ribosomal subunit protein uS7cz/uS7cy (rps7-A) from Anthoceros angustus (Hornwort).